The primary structure comprises 485 residues: Fumarate hydratase, mitochondrial (485 aa).

The N-terminal 19 residues, 1-19, are a transit peptide targeting the mitochondrion; that stretch reads MLSASRKLNNQQFLKTIRN. Residues 118–120, 150–153, 160–162, and threonine 208 contribute to the substrate site; these read SGT, HPND, and SSN. Histidine 209 acts as the Proton donor/acceptor in catalysis. Serine 339 is a catalytic residue. Substrate contacts are provided by residues serine 340 and 345–347; that span reads KVN.

Belongs to the class-II fumarase/aspartase family. Fumarase subfamily. In terms of assembly, homotetramer.

It localises to the mitochondrion. It is found in the cytoplasm. It carries out the reaction (S)-malate = fumarate + H2O. It participates in carbohydrate metabolism; tricarboxylic acid cycle; (S)-malate from fumarate: step 1/1. In terms of biological role, catalyzes the reversible stereospecific interconversion of fumarate to L-malate. Catalyzes the hydration of fumarate to L-malate in the tricarboxylic acid (TCA) cycle to facilitate a transition step in the production of energy in the form of NADH. The protein is Fumarate hydratase, mitochondrial of Dictyostelium discoideum (Social amoeba).